The sequence spans 234 residues: dTDP-4-amino-4,6-dideoxyglucose formyltransferase (234 aa).

DTDP-4-amino-4,6-dideoxy-alpha-D-glucose is bound by residues Asn9 and 62 to 64 (HCK). 65-67 (QRF) provides a ligand contact to (6R)-10-formyltetrahydrofolate. His81 serves as the catalytic Proton acceptor. 90–94 (GWFPQ) serves as a coordination point for dTDP-4-amino-4,6-dideoxy-alpha-D-glucose. (6R)-10-formyltetrahydrofolate is bound by residues Asp112, Asp116, and Lys175. Asn209 provides a ligand contact to dTDP-4-amino-4,6-dideoxy-alpha-D-glucose.

It belongs to the dTDP-Qui4N formyltransferase family. As to quaternary structure, homodimer.

The enzyme catalyses dTDP-4-amino-4,6-dideoxy-alpha-D-glucose + (6R)-10-formyltetrahydrofolate = dTDP-4-formamido-4,6-dideoxy-alpha-D-glucose + (6S)-5,6,7,8-tetrahydrofolate + H(+). Sugar N-formyltransferase that catalyzes the conversion of dTDP-4-amino-4,6-dideoxyglucose into dTDP-4-formamido-4,6-dideoxyglucose using N(10)-formyltetrahydrofolate as the carbon source. Plays a role in virulence. This Mycobacterium bovis (strain ATCC BAA-935 / AF2122/97) protein is dTDP-4-amino-4,6-dideoxyglucose formyltransferase.